We begin with the raw amino-acid sequence, 118 residues long: Down syndrome critical region protein 4 (118 aa).

Residues 1–39 are disordered; it reads MSLIILTRDDEPRIFTPDSDAASPALHSTSPLPDPASAS. The segment covering 28-39 has biased composition (low complexity); sequence STSPLPDPASAS.

As to expression, mainly expressed in placenta.

This Homo sapiens (Human) protein is Down syndrome critical region protein 4 (DSCR4).